We begin with the raw amino-acid sequence, 182 residues long: Guanylate kinase (182 aa).

Positions 2-180 constitute a Guanylate kinase-like domain; that stretch reads GTLTVITGPS…ALLKLEGLMG (179 aa). ATP is bound at residue 9–16; the sequence is GPSGVGKG.

This sequence belongs to the guanylate kinase family.

It localises to the cytoplasm. It carries out the reaction GMP + ATP = GDP + ADP. The catalysed reaction is dZMP + ATP = dZDP + ADP. The protein operates within purine metabolism. In terms of biological role, essential for recycling GMP and indirectly, cGMP. Functionally, (Microbial infection) Catalyzes the phosphorylation of dZMP to dZDP, when the bacterium is infected by a phage that produces the substrate for the synthesis of dZTP (2- amino-2'-deoxyadenosine 5'-triphosphate), which is then used by the phage as a DNA polymerase substrate. The chain is Guanylate kinase from Parasynechococcus marenigrum (strain WH8102).